Reading from the N-terminus, the 185-residue chain is Elongation factor P (185 aa).

Belongs to the elongation factor P family.

The protein resides in the cytoplasm. It functions in the pathway protein biosynthesis; polypeptide chain elongation. Its function is as follows. Involved in peptide bond synthesis. Stimulates efficient translation and peptide-bond synthesis on native or reconstituted 70S ribosomes in vitro. Probably functions indirectly by altering the affinity of the ribosome for aminoacyl-tRNA, thus increasing their reactivity as acceptors for peptidyl transferase. The sequence is that of Elongation factor P from Streptococcus pyogenes serotype M5 (strain Manfredo).